Reading from the N-terminus, the 347-residue chain is GMP reductase (347 aa).

108-131 (ADFQKTKDIMALTDDLIFICIDIA) provides a ligand contact to NADP(+). K(+) contacts are provided by Gly181 and Gly183. Catalysis depends on Cys186, which acts as the Thioimidate intermediate. NADP(+) is bound at residue 216–239 (IIGDGGCSCAGDVSKAFGGGADFV).

Belongs to the IMPDH/GMPR family. GuaC type 1 subfamily. As to quaternary structure, homotetramer.

The catalysed reaction is IMP + NH4(+) + NADP(+) = GMP + NADPH + 2 H(+). Its function is as follows. Catalyzes the irreversible NADPH-dependent deamination of GMP to IMP. It functions in the conversion of nucleobase, nucleoside and nucleotide derivatives of G to A nucleotides, and in maintaining the intracellular balance of A and G nucleotides. This chain is GMP reductase, found in Aliivibrio fischeri (strain MJ11) (Vibrio fischeri).